A 787-amino-acid polypeptide reads, in one-letter code: MKFKYCAIFFSGFLGLSAILAACGARGKFDQVDDGKIKLAFSLTSKSASNALQAIVKKYNEVKKPGDYHIEITQIAGGYDGGRSDLQTRVNVKDTTNFYNLILNYPDLVSTLGRVGMELLFDKVNTDKLSDRFLDFNKRISAISKPGIYGIPVSLSTEVLSINGPVLHYILKSAKGDSDNVKVSQRTGETTQKSKVTNPLKINTQNDPATKDLWEKIEASAKANGKSNKDGQTKGKKKVEKSSSSSLVNLKQSTDQTTTDDGSQKSDNKIKESWGEYQEVDGGLKNFEFKASIFENWHDLLDFSTRVAKSFTNVKGKDIKKGTDIQGVLGVDSTPNSLFTSVFAAGGGDYNNFFYKIENGRADFSNFKNKGTSYQNLQKVFGDFKGLIDKNGIFVNKGGSYSSNFQKFHQLAYSISSTSGFFYSFAGNSAKRLKFGDNFIEFPRFTQEIKAPSTENGGQSNLLGTFEVKDSSKSKEVKKTNRKEDGAQNQGKKESDKKTIYLYKSQIPSDKTEGENAILIKEQNVINQLEQAAKKDEKGETVTNKVASLETKAANAKKDSSKTIIGYTTTDNVHEDGKNIFKINKLKTEDYDRKIIVGATEEVLEQSSTLQSDEAIVLPAPGKYQSGDAKKVTITQGPNIIGIHANEKENAETQKFVNWFLNNTESWEVKNGKDSSTKQQTAAEFFAESASYILPLKEIFDKDNKKATENKDNNTSNKKQANTYAEKALDLFQQISKGDIVSYSDPSDFRSGKFRDGIGSNFNAAVSSKADFDRFVKGFIATLGSEI.

A signal peptide spans 1–22 (MKFKYCAIFFSGFLGLSAILAA). The N-palmitoyl cysteine moiety is linked to residue Cys23. The S-diacylglycerol cysteine moiety is linked to residue Cys23. 2 disordered regions span residues 178-270 (SDNV…DNKI) and 473-495 (KSKE…KKES). Over residues 181–208 (VKVSQRTGETTQKSKVTNPLKINTQNDP) the composition is skewed to polar residues. A compositionally biased stretch (basic and acidic residues) spans 209–219 (ATKDLWEKIEA). Over residues 242–261 (SSSSSLVNLKQSTDQTTTDD) the composition is skewed to low complexity.

It belongs to the MG185/MG260 family.

It is found in the cell membrane. This is an uncharacterized protein from Mycoplasma pneumoniae (strain ATCC 29342 / M129 / Subtype 1) (Mycoplasmoides pneumoniae).